The sequence spans 549 residues: Exodeoxyribonuclease 7 large subunit (549 aa).

Positions 511–549 (LVATDPPVDPKPTRKPVQKSSSPKPSSRKPKKSQQEDLF) are disordered.

Belongs to the XseA family. As to quaternary structure, heterooligomer composed of large and small subunits.

The protein localises to the cytoplasm. It catalyses the reaction Exonucleolytic cleavage in either 5'- to 3'- or 3'- to 5'-direction to yield nucleoside 5'-phosphates.. Its function is as follows. Bidirectionally degrades single-stranded DNA into large acid-insoluble oligonucleotides, which are then degraded further into small acid-soluble oligonucleotides. This is Exodeoxyribonuclease 7 large subunit from Beijerinckia indica subsp. indica (strain ATCC 9039 / DSM 1715 / NCIMB 8712).